The primary structure comprises 294 residues: MANITAQMVKELREKTGAGMMDCKKALVETEGDMEKAIDYLREKGIAKAAKKSDRVASEGMTHVISNEKHAVVLEVNAETDFVAKNDNFQQLVDALAKQILAVRPDSLEDALKTEMPNGQTVQDYITEAITKIGENISLRRFEVKEKADNSAFGEYIHMNGRIGVLTLLEGTTDTTVAKDVAMHIAAINPKYISREDVSSEEVAHEKEVLTQQALNEGKPANIVEKMVEGRLKKYLSEISLEDQPFVKNPDITVGEYVKQSGGKVVSFVRFEVGEGIEKKEDNFVEEVMSQVKK.

Residues Thr-80–Val-83 form an involved in Mg(2+) ion dislocation from EF-Tu region.

This sequence belongs to the EF-Ts family.

The protein localises to the cytoplasm. Functionally, associates with the EF-Tu.GDP complex and induces the exchange of GDP to GTP. It remains bound to the aminoacyl-tRNA.EF-Tu.GTP complex up to the GTP hydrolysis stage on the ribosome. This chain is Elongation factor Ts, found in Listeria monocytogenes serovar 1/2a (strain ATCC BAA-679 / EGD-e).